Consider the following 525-residue polypeptide: MTQNIHQHRILILDFGSQYTQLVARRVRELGVYCELWAWDVTEAQIRGFNPNGIILSGGPESTTEFGSPRAPEYVFNAGVPVLGVCYGMQTMAMQLGGHVEGSNEREFGYAQVEVKTNSALVRDIQDALSATGAPLLDVWMSHGDKVTAIPEGFETVASTDTCPFAIMANEEKRFYGVQFHPEVTHTRQGQRMLERFVLDICQCEALWTPAKIIDDAVNRIREQVGNDSVILGLSGGVDSSVTAMLLHRAIGDRLTCVFVDNGLLRLNEADQVLEMFGDNFGLNIVHVAAEDRFLNELAGEDEPEAKRKIIGRVFVEVFDEEANKQAEVKWLAQGTIYPDVIESAASATGKAHVIKSHHNVGGLPKEMKLGLVEPLKELFKDEVRKIGLELGLPYNMLYRHPFPGPGLGVRVLGEVKKEYCDLLRRADAIFIEELHKADLYNKVSQAFTVFLPVRSVGVMGDGRKYDWVVALRAVETIDFMTAHWAHLPYDFLGRVSNRIINEVDGISRVVYDVSGKPPATIEWE.

The Glutamine amidotransferase type-1 domain maps to 9–207 (RILILDFGSQ…VLDICQCEAL (199 aa)). The active-site Nucleophile is the Cys-86. Catalysis depends on residues His-181 and Glu-183. Positions 208–400 (WTPAKIIDDA…LGLPYNMLYR (193 aa)) constitute a GMPS ATP-PPase domain. 235–241 (SGGVDSS) contacts ATP.

As to quaternary structure, homodimer.

It catalyses the reaction XMP + L-glutamine + ATP + H2O = GMP + L-glutamate + AMP + diphosphate + 2 H(+). It participates in purine metabolism; GMP biosynthesis; GMP from XMP (L-Gln route): step 1/1. Catalyzes the synthesis of GMP from XMP. The polypeptide is GMP synthase [glutamine-hydrolyzing] (Pectobacterium atrosepticum (strain SCRI 1043 / ATCC BAA-672) (Erwinia carotovora subsp. atroseptica)).